The following is a 274-amino-acid chain: MAVRKLKPTTPGQRHKIIGTFEEITASVPEKSLVYGKKSSGGRNNEGKMTMRYIGGGHRKVIRIVDFKRNKDGVPAVVKTIEYDPNRSARIALLYYADGEKRYIIAPNGLQVGATLMSGETAAPEIGNTLPLQNIPVGTVIHNIELRPGQGAALVRSAGNFAQLTSREGKYCVIKLPSGEVRQILSTCKATIGSVGNSDHGLERSGKAGRSRWQGRRPRNRGVVMNPVDHPMGGGEGRSSGGHPRSRKGLYAKGLKTRAPKKQSSKYIIERRKK.

The tract at residues 195–274 (VGNSDHGLER…SKYIIERRKK (80 aa)) is disordered. Composition is skewed to basic residues over residues 207 to 220 (KAGRSRWQGRRPRN) and 244 to 264 (PRSRKGLYAKGLKTRAPKKQS).

It belongs to the universal ribosomal protein uL2 family. As to quaternary structure, part of the 50S ribosomal subunit. Forms a bridge to the 30S subunit in the 70S ribosome.

Functionally, one of the primary rRNA binding proteins. Required for association of the 30S and 50S subunits to form the 70S ribosome, for tRNA binding and peptide bond formation. It has been suggested to have peptidyltransferase activity; this is somewhat controversial. Makes several contacts with the 16S rRNA in the 70S ribosome. This is Large ribosomal subunit protein uL2 from Bacteroides thetaiotaomicron (strain ATCC 29148 / DSM 2079 / JCM 5827 / CCUG 10774 / NCTC 10582 / VPI-5482 / E50).